Here is a 63-residue protein sequence, read N- to C-terminus: Large ribosomal subunit protein uL30 (63 aa).

This sequence belongs to the universal ribosomal protein uL30 family. In terms of assembly, part of the 50S ribosomal subunit.

The polypeptide is Large ribosomal subunit protein uL30 (Xylella fastidiosa (strain M23)).